A 186-amino-acid polypeptide reads, in one-letter code: ATP synthase subunit delta (186 aa).

This sequence belongs to the ATPase delta chain family. In terms of assembly, F-type ATPases have 2 components, F(1) - the catalytic core - and F(0) - the membrane proton channel. F(1) has five subunits: alpha(3), beta(3), gamma(1), delta(1), epsilon(1). CF(0) has four main subunits: a(1), b(1), b'(1) and c(10-14). The alpha and beta chains form an alternating ring which encloses part of the gamma chain. F(1) is attached to F(0) by a central stalk formed by the gamma and epsilon chains, while a peripheral stalk is formed by the delta, b and b' chains.

Its subcellular location is the cell inner membrane. Functionally, f(1)F(0) ATP synthase produces ATP from ADP in the presence of a proton or sodium gradient. F-type ATPases consist of two structural domains, F(1) containing the extramembraneous catalytic core and F(0) containing the membrane proton channel, linked together by a central stalk and a peripheral stalk. During catalysis, ATP synthesis in the catalytic domain of F(1) is coupled via a rotary mechanism of the central stalk subunits to proton translocation. Its function is as follows. This protein is part of the stalk that links CF(0) to CF(1). It either transmits conformational changes from CF(0) to CF(1) or is implicated in proton conduction. The chain is ATP synthase subunit delta from Rhodopseudomonas palustris (strain HaA2).